The chain runs to 433 residues: Steroid C26-monooxygenase (433 aa).

Residue Gly-202 participates in substrate binding. Heme is bound at residue Cys-377.

This sequence belongs to the cytochrome P450 family. Heme is required as a cofactor.

The catalysed reaction is cholest-4-en-3-one + 6 reduced [2Fe-2S]-[ferredoxin] + 3 O2 + 5 H(+) = (25S)-3-oxocholest-4-en-26-oate + 6 oxidized [2Fe-2S]-[ferredoxin] + 4 H2O. Its pathway is steroid metabolism; cholesterol degradation. Its function is as follows. Involved in the utilization of cholesterol as the sole carbon and energy source by degrading the side chain during infection. Primarily catalyzes the sequential oxidation of the terminal methyl of cholest-4-en-3-one into (25S)-26-hydroxycholest-4-en-3-one (alcohol), (25S)-26-oxocholest-4-en-3-one (aldehyde), to finally yield the carboxylic acid (25S)-3-oxocholest-4-en-26-oate. Also able to sequentially oxidize cholesterol itself, not only cholest-4-en-3-one. The sequence is that of Steroid C26-monooxygenase (cyp125) from Mycobacterium bovis (strain ATCC BAA-935 / AF2122/97).